Here is a 364-residue protein sequence, read N- to C-terminus: Developmentally-regulated GTP-binding protein 2 homolog (364 aa).

The OBG-type G domain maps to 63-288 (ARVALIGFPS…LLDKIWDYLN (226 aa)). Residues 69 to 76 (GFPSVGKS), 115 to 119 (DTPGI), and 246 to 249 (NKMD) contribute to the GTP site. Residues 288-363 (NLVRVYTKLR…EDEDVIQIVK (76 aa)) form the TGS domain.

The protein belongs to the TRAFAC class OBG-HflX-like GTPase superfamily. OBG GTPase family.

This Dictyostelium discoideum (Social amoeba) protein is Developmentally-regulated GTP-binding protein 2 homolog (drg2).